A 417-amino-acid polypeptide reads, in one-letter code: Squalene synthase (417 aa).

Residues Arg52 and Arg77 each coordinate NADP(+). Mg(2+)-binding residues include Asp80, Glu83, and Asp84. Arg218 is an NADP(+) binding site. The chain crosses the membrane as a helical span at residues 284–304 (SIFNFCAIPQVMAIATLAACY). Positions 315 and 317 each coordinate NADP(+). A helical transmembrane segment spans residues 384–404 (PIYLSFVMLLAALSWQYLSTL).

It belongs to the phytoene/squalene synthase family. The cofactor is Mg(2+).

It localises to the endoplasmic reticulum membrane. The catalysed reaction is 2 (2E,6E)-farnesyl diphosphate + NADPH + H(+) = squalene + 2 diphosphate + NADP(+). The enzyme catalyses 2 (2E,6E)-farnesyl diphosphate + NADH + H(+) = squalene + 2 diphosphate + NAD(+). It catalyses the reaction presqualene diphosphate + NADH + H(+) = squalene + diphosphate + NAD(+). It carries out the reaction presqualene diphosphate + NADPH + H(+) = squalene + diphosphate + NADP(+). The catalysed reaction is 2 (2E,6E)-farnesyl diphosphate = presqualene diphosphate + diphosphate. Its pathway is terpene metabolism; lanosterol biosynthesis; lanosterol from farnesyl diphosphate: step 1/3. Functionally, catalyzes the condensation of 2 farnesyl pyrophosphate (FPP) moieties to form squalene. Proceeds in two distinct steps. In the first half-reaction, two molecules of FPP react to form the stable presqualene diphosphate intermediate (PSQPP), with concomitant release of a proton and a molecule of inorganic diphosphate. In the second half-reaction, PSQPP undergoes heterolysis, isomerization, and reduction with NADPH or NADH to form squalene. It is the first committed enzyme of the sterol biosynthesis pathway. The polypeptide is Squalene synthase (FDFT1) (Bos taurus (Bovine)).